We begin with the raw amino-acid sequence, 71 residues long: Large ribosomal subunit protein bL31 (71 aa).

Zn(2+) is bound by residues cysteine 16, cysteine 18, cysteine 37, and cysteine 40.

It belongs to the bacterial ribosomal protein bL31 family. Type A subfamily. In terms of assembly, part of the 50S ribosomal subunit. Zn(2+) is required as a cofactor.

Binds the 23S rRNA. This Pectobacterium atrosepticum (strain SCRI 1043 / ATCC BAA-672) (Erwinia carotovora subsp. atroseptica) protein is Large ribosomal subunit protein bL31.